The primary structure comprises 509 residues: Lengsin (509 aa).

The interval 1–34 is disordered; sequence MNNEEDLLQEDSTRDEGNETEANSMNTLRRTRKK. In terms of domain architecture, GS beta-grasp spans 83–177; that stretch reads NRLQFVRFEA…VICDTFTVTG (95 aa). In terms of domain architecture, GS catalytic spans 184–509; sequence PRYIAKRQLS…ERNKFLEYFI (326 aa).

The protein belongs to the glutamine synthetase family. Dodecamer. Interacts with BFSP2 and VIM. As to expression, abundantly expressed in lens.

In terms of biological role, may act as a component of the cytoskeleton or as a chaperone for the reorganization of intermediate filament proteins during terminal differentiation in the lens. Does not seem to have enzymatic activity. This Homo sapiens (Human) protein is Lengsin (LGSN).